Consider the following 198-residue polypeptide: Ras-related protein Rab-34, isoform NARR (198 aa).

Tandem repeats lie at residues 7–15, 16–24, 25–33, 34–42, 43–51, 52–60, 61–69, 70–78, 79–87, 88–96, 97–105, 106–114, and 115–123. The segment at 7-125 is 13 x 9 AA approximate tandem-repeats of P-R-V-I-V-G-(S/T)-P-R; the sequence is PRDDVGSPRP…RPRVIVGSPR (119 aa). Residue Ser13 is modified to Phosphoserine. Positions 37–64 are disordered; the sequence is IVGSARARPPPDGTPRPQLAAEESPRPR. The residue at position 69 (Thr69) is a Phosphothreonine. Phosphoserine is present on residues Ser78, Ser87, and Ser96. Over residues 94-121 the composition is skewed to low complexity; the sequence is VASPRPRTPVGSPWPRVVVGTPRPRVIV. The interval 94-198 is disordered; sequence VASPRPRTPV…GAPDRHRGQI (105 aa). Ser123 is subject to Phosphoserine. The span at 145–157 shows a compositional bias: basic and acidic residues; it reads RRQDEHSGTRAEG. A compositionally biased stretch (low complexity) spans 161-178; it reads GGAAPVPEEGGRFARAQR.

May interact with EIF5A and ERF1. In terms of processing, phosphorylated during M-phase.

Its subcellular location is the nucleus. It is found in the nucleolus. This chain is Ras-related protein Rab-34, isoform NARR (RAB34), found in Homo sapiens (Human).